The following is a 754-amino-acid chain: 5-methyltetrahydropteroyltriglutamate--homocysteine methyltransferase (754 aa).

Residues Arg-17–Lys-20 and Lys-117 each bind 5-methyltetrahydropteroyltri-L-glutamate. Residues Ile-431–Ser-433 and Glu-484 contribute to the L-homocysteine site. L-methionine is bound by residues Ile-431–Ser-433 and Glu-484. Residues Arg-515–Cys-516 and Trp-561 each bind 5-methyltetrahydropteroyltri-L-glutamate. An L-homocysteine-binding site is contributed by Asp-599. L-methionine is bound at residue Asp-599. Glu-605 is a 5-methyltetrahydropteroyltri-L-glutamate binding site. His-641, Cys-643, and Glu-665 together coordinate Zn(2+). Catalysis depends on His-694, which acts as the Proton donor. Position 726 (Cys-726) interacts with Zn(2+).

It belongs to the vitamin-B12 independent methionine synthase family. Requires Zn(2+) as cofactor.

The catalysed reaction is 5-methyltetrahydropteroyltri-L-glutamate + L-homocysteine = tetrahydropteroyltri-L-glutamate + L-methionine. The protein operates within amino-acid biosynthesis; L-methionine biosynthesis via de novo pathway; L-methionine from L-homocysteine (MetE route): step 1/1. Its function is as follows. Catalyzes the transfer of a methyl group from 5-methyltetrahydrofolate to homocysteine resulting in methionine formation. This chain is 5-methyltetrahydropteroyltriglutamate--homocysteine methyltransferase, found in Salmonella agona (strain SL483).